Here is a 273-residue protein sequence, read N- to C-terminus: MTIVATATRPQRAEGRGHLAAKLLDGRTRIRELYQEGAAKIRLPNTFDASMEAVIINTAGGLTGGDRMDWSVVAGAGTKIDVTTQACEKIYKASAGVAEVTTRIEAGAGARVDWLPQETILFDRAALFRRLDVDLDESAEFLAVEAVLLGRKAMGETVDTGLFRDRWRIRRSGRLIHAEELRFSEGVAALSARQAVLGGQVAFATLLYAGPLAEAYLGRVRSLLEGAMGGASAWGDKLVVRLAAADGFTLRKILIPVISVLRNGAPVPKVWNL.

This sequence belongs to the UreD family. As to quaternary structure, ureD, UreF and UreG form a complex that acts as a GTP-hydrolysis-dependent molecular chaperone, activating the urease apoprotein by helping to assemble the nickel containing metallocenter of UreC. The UreE protein probably delivers the nickel.

It localises to the cytoplasm. Required for maturation of urease via the functional incorporation of the urease nickel metallocenter. This is Urease accessory protein UreD from Rhizobium etli (strain ATCC 51251 / DSM 11541 / JCM 21823 / NBRC 15573 / CFN 42).